We begin with the raw amino-acid sequence, 985 residues long: DNA repair protein REV1 (985 aa).

Residues 161-249 (QSSKIFKNCV…RLLPWQNYSL (89 aa)) form the BRCT domain. The interaction with target DNA stretch occupies residues 319–329 (YFAHSRLHHLS). Residues R324 and 362-366 (DFDCF) each bind dCTP. Positions 358 to 554 (IFHIDFDCFF…FKLDDLPGVG (197 aa)) constitute a UmuC domain. 2 residues coordinate Mg(2+): D362 and F363. The segment at 395–397 (TKN) is interaction with target DNA. DCTP contacts are provided by residues 402–408 (SCNYVAR), N414, and D467. The Mg(2+) site is built by D467 and E468. Interaction with target DNA stretches follow at residues 554–557 (GHST) and 620–628 (RKSLSIDIN).

It belongs to the DNA polymerase type-Y family. Interacts with REV7. The cofactor is Mg(2+).

The protein localises to the nucleus. It localises to the mitochondrion. Its function is as follows. Deoxycytidyl transferase involved in DNA repair. Transfers a dCMP residue from dCTP to the 3'-end of a DNA primer in a template-dependent reaction. May assist in the first step in the bypass of abasic lesions by the insertion of a nucleotide opposite the lesion. Required for normal induction of mutations by physical and chemical agents. Involved in mitochondrial DNA mutagenesis. The protein is DNA repair protein REV1 (REV1) of Saccharomyces cerevisiae (strain ATCC 204508 / S288c) (Baker's yeast).